A 196-amino-acid polypeptide reads, in one-letter code: MYEYINGLITNITPSYIVIASRSGVGYRLYSANPYRFEENVESHVYVQQIVRENDISLYGFIDADEKALFNKLLNVSGIGPKSALAILANGDAEGLISAVENDNVAYLTQFPGVGKKTAQQIVLDLKGKLDELASKTGMVDSSSNPEQSQALDDALEALLALGYTAKDVKAVAQIIGRNSDTTDGYIRSALKLLVK.

Residues 1 to 62 form a domain I region; that stretch reads MYEYINGLIT…ENDISLYGFI (62 aa). Positions 63 to 141 are domain II; that stretch reads DADEKALFNK…ELASKTGMVD (79 aa). The segment at 142–148 is flexible linker; sequence SSSNPEQ. The tract at residues 148–196 is domain III; that stretch reads QSQALDDALEALLALGYTAKDVKAVAQIIGRNSDTTDGYIRSALKLLVK.

The protein belongs to the RuvA family. As to quaternary structure, homotetramer. Forms an RuvA(8)-RuvB(12)-Holliday junction (HJ) complex. HJ DNA is sandwiched between 2 RuvA tetramers; dsDNA enters through RuvA and exits via RuvB. An RuvB hexamer assembles on each DNA strand where it exits the tetramer. Each RuvB hexamer is contacted by two RuvA subunits (via domain III) on 2 adjacent RuvB subunits; this complex drives branch migration. In the full resolvosome a probable DNA-RuvA(4)-RuvB(12)-RuvC(2) complex forms which resolves the HJ.

Its subcellular location is the cytoplasm. In terms of biological role, the RuvA-RuvB-RuvC complex processes Holliday junction (HJ) DNA during genetic recombination and DNA repair, while the RuvA-RuvB complex plays an important role in the rescue of blocked DNA replication forks via replication fork reversal (RFR). RuvA specifically binds to HJ cruciform DNA, conferring on it an open structure. The RuvB hexamer acts as an ATP-dependent pump, pulling dsDNA into and through the RuvAB complex. HJ branch migration allows RuvC to scan DNA until it finds its consensus sequence, where it cleaves and resolves the cruciform DNA. The polypeptide is Holliday junction branch migration complex subunit RuvA (Leuconostoc mesenteroides subsp. mesenteroides (strain ATCC 8293 / DSM 20343 / BCRC 11652 / CCM 1803 / JCM 6124 / NCDO 523 / NBRC 100496 / NCIMB 8023 / NCTC 12954 / NRRL B-1118 / 37Y)).